The chain runs to 404 residues: Cysteine desulfurase IscS (404 aa).

Residues 75–76, N155, Q183, and 203–205 each bind pyridoxal 5'-phosphate; these read AT and SAH. K206 bears the N6-(pyridoxal phosphate)lysine mark. T243 is a pyridoxal 5'-phosphate binding site. The Cysteine persulfide intermediate role is filled by C328. Position 328 (C328) interacts with [2Fe-2S] cluster.

The protein belongs to the class-V pyridoxal-phosphate-dependent aminotransferase family. NifS/IscS subfamily. In terms of assembly, homodimer. Forms a heterotetramer with IscU, interacts with other sulfur acceptors. It depends on pyridoxal 5'-phosphate as a cofactor.

The protein localises to the cytoplasm. It catalyses the reaction (sulfur carrier)-H + L-cysteine = (sulfur carrier)-SH + L-alanine. The protein operates within cofactor biosynthesis; iron-sulfur cluster biosynthesis. In terms of biological role, master enzyme that delivers sulfur to a number of partners involved in Fe-S cluster assembly, tRNA modification or cofactor biosynthesis. Catalyzes the removal of elemental sulfur atoms from cysteine to produce alanine. Functions as a sulfur delivery protein for Fe-S cluster synthesis onto IscU, an Fe-S scaffold assembly protein, as well as other S acceptor proteins. This chain is Cysteine desulfurase IscS, found in Pseudomonas putida (strain GB-1).